Consider the following 343-residue polypeptide: S-adenosylmethionine:tRNA ribosyltransferase-isomerase (343 aa).

The protein belongs to the QueA family. As to quaternary structure, monomer.

It localises to the cytoplasm. The catalysed reaction is 7-aminomethyl-7-carbaguanosine(34) in tRNA + S-adenosyl-L-methionine = epoxyqueuosine(34) in tRNA + adenine + L-methionine + 2 H(+). It functions in the pathway tRNA modification; tRNA-queuosine biosynthesis. Its function is as follows. Transfers and isomerizes the ribose moiety from AdoMet to the 7-aminomethyl group of 7-deazaguanine (preQ1-tRNA) to give epoxyqueuosine (oQ-tRNA). This is S-adenosylmethionine:tRNA ribosyltransferase-isomerase from Pseudoalteromonas translucida (strain TAC 125).